We begin with the raw amino-acid sequence, 380 residues long: Cytochrome b (380 aa).

The next 4 membrane-spanning stretches (helical) occupy residues 34-54 (FGSL…LLAM), 78-99 (WLIR…YFHI), 114-134 (WNTG…GYVL), and 179-199 (FFAL…IHLT). 2 residues coordinate heme b: H84 and H98. Heme b is bound by residues H183 and H197. H202 contributes to the a ubiquinone binding site. The next 4 helical transmembrane spans lie at 227–247 (LKDI…ALFS), 289–309 (LGGV…PFLH), 321–341 (ISQL…WVGS), and 348–368 (FIII…VLFP).

The protein belongs to the cytochrome b family. In terms of assembly, the cytochrome bc1 complex contains 11 subunits: 3 respiratory subunits (MT-CYB, CYC1 and UQCRFS1), 2 core proteins (UQCRC1 and UQCRC2) and 6 low-molecular weight proteins (UQCRH/QCR6, UQCRB/QCR7, UQCRQ/QCR8, UQCR10/QCR9, UQCR11/QCR10 and a cleavage product of UQCRFS1). This cytochrome bc1 complex then forms a dimer. Heme b is required as a cofactor.

It localises to the mitochondrion inner membrane. Its function is as follows. Component of the ubiquinol-cytochrome c reductase complex (complex III or cytochrome b-c1 complex) that is part of the mitochondrial respiratory chain. The b-c1 complex mediates electron transfer from ubiquinol to cytochrome c. Contributes to the generation of a proton gradient across the mitochondrial membrane that is then used for ATP synthesis. This Pachyptila salvini (Salvin's prion) protein is Cytochrome b (MT-CYB).